Here is a 577-residue protein sequence, read N- to C-terminus: Arginine--tRNA ligase (577 aa).

The short motif at 122–132 (PNVAKEMHVGH) is the 'HIGH' region element.

The protein belongs to the class-I aminoacyl-tRNA synthetase family. In terms of assembly, monomer.

It localises to the cytoplasm. It carries out the reaction tRNA(Arg) + L-arginine + ATP = L-arginyl-tRNA(Arg) + AMP + diphosphate. This Salmonella enteritidis PT4 (strain P125109) protein is Arginine--tRNA ligase.